A 181-amino-acid chain; its full sequence is MEAMNVEKASADGNLPEVISNIKETLKIVSRTPVNITMAGDSGNGMSTFISALRNTGHEGKASPPTELVKATQRCASYFSSHFSNVVLWDLPGTGSATTTLENYLMEMQFNRYDFIMVASAQFSMNHVMLAKTAEDMGKKFYIVWTKLDMDLSTGALPEVQLLQIRENVLENLQKERVCEY.

The IRG-type G domain maps to 32 to 181; that stretch reads TPVNITMAGD…NLQKERVCEY (150 aa). Residues 41 to 48, 66 to 70, and 147 to 149 contribute to the GTP site; these read DSGNGMST, TELVK, and KLD.

The protein belongs to the TRAFAC class dynamin-like GTPase superfamily. IRG family. Interacts with ULK1; promoting the coassembly of ULK1 and BECN1. Interacts with BECN1; enhancing BECN1-interacting partners and influencing the composition of the BECN1 complex. Interacts with ATG16L1. Interacts with NOD2; promoting IRGM 'Lys-63'-linked polyubiquitination, which is required for interactions with the core autophagy factors. Interacts with STX17; promoting STX17 recruitment to autophagosomes. Interacts with ATG8 proteins (GABARAP, GABARAPL1, GABARAPL2, MAP1LC3A, MAP1LC3B and MAP1LC3C); promoting STX17 recruitment to autophagosomes. Interacts with TFEB; promoting association between TFEB and PPP3CB and TFEB dephosphorylation. Interacts with PPP3CB; promoting association between TFEB and PPP3CB and TFEB dephosphorylation. Interacts with NLRP3; preventing NLRP3 inflammasome assembly and promoting SQSTM1/p62-dependent autophagic degradation of NLRP3. Interacts with CGAS; promoting SQSTM1/p62-dependent autophagic degradation of CGAS. Interacts with RIGI/RIG-I; promoting SQSTM1/p62-dependent autophagic degradation of RIGI/RIG-I. Interacts with NOD1; promoting SQSTM1/p62-dependent autophagic degradation of RIGI/RIG-I. Interacts with NOD2; promoting SQSTM1/p62-dependent autophagic degradation of RIGI/RIG-I. Interacts with RIPK2; promoting SQSTM1/p62-dependent autophagic degradation of RIGI/RIG-I. In terms of processing, ubiquitinated via 'Lys-63'-linked polyubiquitination in a NOD2-dependent process. 'Lys-63'-linked polyubiquitination is required for interactions with the core autophagy factors. In terms of tissue distribution, widely expressed (at protein level). Expressed in several tissues including colon, small bowel and peripheral blood leukocytes.

It is found in the golgi apparatus membrane. Its subcellular location is the cell membrane. It localises to the cytoplasmic vesicle. The protein localises to the phagosome membrane. The protein resides in the autophagosome membrane. It is found in the lysosome membrane. Its subcellular location is the late endosome membrane. It localises to the mitochondrion membrane. The protein localises to the cell projection. The protein resides in the phagocytic cup. It is found in the mitochondrion. It catalyses the reaction GTP + H2O = GDP + phosphate + H(+). Immunity-related GTPase that plays important roles in innate immunity and inflammatory response. Acts as a dynamin-like protein that binds to intracellular membranes and promotes remodeling and trafficking of those membranes. Required for clearance of acute protozoan and bacterial infections by interacting with autophagy and lysosome regulatory proteins, thereby promoting the fusion of phagosomes with lysosomes for efficient degradation of cargo including microbes. Regulates selective autophagy, including xenophagy and mitophagy, both directly and indirectly. Directly regulates autophagy by acting as a molecular adapter that promotes the coassembly of the core autophagy machinery to mediate antimicrobial defense: IRGM (1) activates AMPK, which in turn phosphorylates ULK1 and BECN1 to induce autophagy, (2) promotes the coassembly of ULK1 and BECN1, enhancing BECN1-interacting partners and (3) influences the composition of the BECN1 complex, by competing with the negative regulators BCL2 and RUBCN, to trigger autophagy. Also activates autophagy by promoting recruitment of STX17 to autophagosomes. In collaboration with ATG8 proteins, regulate lysosomal biogenesis, a fundamental process for any autophagic pathway, by promoting TFEB dephosphorylation. Also modulates autophagy by assisting with autophagosome formation and preventing lysosomal deacidification. While activating autophagy, acts as a key negative regulator of the inflammatory and interferon responses both by (1) promoting mitophagy and (2) mediating autophagy-dependent degradation of effectors of the inflammatory response. Promotes degradation of damaged and IFNG/IFN-gamma-stressed mitochondria via mitophagy, preventing cytosolic release of ligands that activate inflammation. Acts as a suppressor of inflammation by promoting recruitment of inflammation effectors, such as CGAS, RIGI/RIG-I and NLRP3, to autophagosome membranes, leading to their SQSTM1/p62-dependent autophagic degradation. Also directly inhibits assembly of the NLRP3 inflammasome by preventing the association between NLRP3 and PYCARD. Acts as a negative regulator of antiviral innate immune response by suppressing the RIPK2-dependent pro-inflammatory response: mediates recruitment of RIPosomes, composed of RIPK2 and NOD1 or NOD2, to autophagosome membranes, promoting their SQSTM1/p62-dependent autophagic degradation. In terms of biological role, acts as a positive regulator of mitophagy in response to intracellular mycobacteria infection: specifically binds cardiolipin, leading to its translocation to mitochondria, where it promotes affected mitochondrial fission and mitophagy. Its function is as follows. (Microbial infection) Following infection by hepatitis C virus (HCV), promotes HCV-triggered membrane remodeling, leading to autophagy and Golgi fragmentation, a step required for HCV replication. The polypeptide is Immunity-related GTPase family M protein (Homo sapiens (Human)).